Here is a 125-residue protein sequence, read N- to C-terminus: RutC family protein STK_08110 (125 aa).

It belongs to the RutC family.

The chain is RutC family protein STK_08110 from Sulfurisphaera tokodaii (strain DSM 16993 / JCM 10545 / NBRC 100140 / 7) (Sulfolobus tokodaii).